The sequence spans 463 residues: Asparagine--tRNA ligase (463 aa).

It belongs to the class-II aminoacyl-tRNA synthetase family. As to quaternary structure, homodimer.

It is found in the cytoplasm. The catalysed reaction is tRNA(Asn) + L-asparagine + ATP = L-asparaginyl-tRNA(Asn) + AMP + diphosphate + H(+). This Clostridium tetani (strain Massachusetts / E88) protein is Asparagine--tRNA ligase.